The primary structure comprises 374 residues: MSDNAHNLLYDKFELPEAVKMLPVEGLPIDKHARFIAEPLERGMGHTLGNALRRALLIGLEAPAIISFAMTGVLHEYMAIEGVIEDVTNIILNLKGALLKKYPMQDSSLGRTTQVLKASISIDASDLAAANGQKEVTLQDLLQEGDFEAVNPDQVIFTVTQPIQLEVVLRIAFGRGYTPSERIVLEDKGVYEIVLDAAFSPVTLVNYFVEDTRVGQDTDFDRLVLIVETDGRVTPKEALAFSTQILTKHFSIFENMDEKKIVFEEAISIEKENKDDILHKLILGINEIELSVRSTNCLSNANIETIGELVIMPEPRLLQFRNFGKKSLCEIKNKLKEMKLELGMDLTQFGVGLDNVKEKMKWYAEKIRAKNIKG.

The interval 1–257 is alpha N-terminal domain (alpha-NTD); sequence MSDNAHNLLY…KHFSIFENMD (257 aa). The tract at residues 274-374 is alpha C-terminal domain (alpha-CTD); sequence KDDILHKLIL…EKIRAKNIKG (101 aa).

It belongs to the RNA polymerase alpha chain family. In terms of assembly, homodimer. The RNAP catalytic core consists of 2 alpha, 1 beta, 1 beta' and 1 omega subunit. When a sigma factor is associated with the core the holoenzyme is formed, which can initiate transcription.

It carries out the reaction RNA(n) + a ribonucleoside 5'-triphosphate = RNA(n+1) + diphosphate. DNA-dependent RNA polymerase catalyzes the transcription of DNA into RNA using the four ribonucleoside triphosphates as substrates. This chain is DNA-directed RNA polymerase subunit alpha, found in Chlamydia pneumoniae (Chlamydophila pneumoniae).